The primary structure comprises 182 residues: HGPRTase-like protein 1 (182 aa).

The protein belongs to the purine/pyrimidine phosphoribosyltransferase family. Archaeal HPRT subfamily.

Functionally, may catalyze a purine salvage reaction, the substrate is unknown. This chain is HGPRTase-like protein 1, found in Haloarcula marismortui (strain ATCC 43049 / DSM 3752 / JCM 8966 / VKM B-1809) (Halobacterium marismortui).